Consider the following 193-residue polypeptide: Bcl-2-like protein 2 (193 aa).

The residue at position 2 (A2) is an N-acetylalanine. The BH4 motif lies at 9–29 (DTRALVADFVGYKLRQKGYVC). Residues 85-104 (ELFQGGPNWGRLVAFFVFGA) carry the BH1 motif. Residues 136–151 (DWIHSSGGWAEFTALY) carry the BH2 motif.

Belongs to the Bcl-2 family. Interacts with HIF3A (via C-terminus domain). Interacts with BOP.

The protein localises to the mitochondrion membrane. Functionally, promotes cell survival. Blocks dexamethasone-induced apoptosis. Mediates survival of postmitotic Sertoli cells by suppressing death-promoting activity of BAX. The chain is Bcl-2-like protein 2 (BCL2L2) from Bos taurus (Bovine).